The chain runs to 352 residues: Nicotinate-nucleotide--dimethylbenzimidazole phosphoribosyltransferase (352 aa).

The Proton acceptor role is filled by E318.

The protein belongs to the CobT family.

The catalysed reaction is 5,6-dimethylbenzimidazole + nicotinate beta-D-ribonucleotide = alpha-ribazole 5'-phosphate + nicotinate + H(+). It participates in nucleoside biosynthesis; alpha-ribazole biosynthesis; alpha-ribazole from 5,6-dimethylbenzimidazole: step 1/2. Catalyzes the synthesis of alpha-ribazole-5'-phosphate from nicotinate mononucleotide (NAMN) and 5,6-dimethylbenzimidazole (DMB). This Geobacter sulfurreducens (strain ATCC 51573 / DSM 12127 / PCA) protein is Nicotinate-nucleotide--dimethylbenzimidazole phosphoribosyltransferase.